Here is a 97-residue protein sequence, read N- to C-terminus: MAKTATPGACASDPGSGPLPENYEMALAELEALVARMEGGTLSLEDSLAAYRRGAALVAFCQQQLEKAEQQVRVLDGASLKPLSAGTAAADGEDDDL.

The disordered stretch occupies residues 1–21; sequence MAKTATPGACASDPGSGPLPE.

Belongs to the XseB family. As to quaternary structure, heterooligomer composed of large and small subunits.

Its subcellular location is the cytoplasm. It catalyses the reaction Exonucleolytic cleavage in either 5'- to 3'- or 3'- to 5'-direction to yield nucleoside 5'-phosphates.. Its function is as follows. Bidirectionally degrades single-stranded DNA into large acid-insoluble oligonucleotides, which are then degraded further into small acid-soluble oligonucleotides. This Burkholderia mallei (strain NCTC 10247) protein is Exodeoxyribonuclease 7 small subunit.